The following is a 120-amino-acid chain: Spermidine export protein MdtJ (120 aa).

The next 4 helical transmembrane spans lie at 1-21, 31-51, 54-74, and 81-101; these read MFYW…TLSM, AGFI…SFAV, IALG…ITIF, and EALS…IVLI.

This sequence belongs to the drug/metabolite transporter (DMT) superfamily. Small multidrug resistance (SMR) (TC 2.A.7.1) family. MdtJ subfamily. Forms a complex with MdtI.

The protein resides in the cell inner membrane. Its function is as follows. Catalyzes the excretion of spermidine. In Salmonella agona (strain SL483), this protein is Spermidine export protein MdtJ.